The sequence spans 449 residues: N-succinylarginine dihydrolase (449 aa).

Residues 19 to 28, Asn-110, and 137 to 138 each bind substrate; these read GGLSYGNVAS and HR. The disordered stretch occupies residues 23-43; the sequence is YGNVASQSNSQQASNPREAAR. Over residues 27-37 the composition is skewed to low complexity; that stretch reads ASQSNSQQASN. Residue Glu-174 is part of the active site. Residue Arg-214 participates in substrate binding. The active site involves His-250. Positions 252 and 365 each coordinate substrate. The active-site Nucleophile is Cys-371.

The protein belongs to the succinylarginine dihydrolase family. In terms of assembly, homodimer.

It carries out the reaction N(2)-succinyl-L-arginine + 2 H2O + 2 H(+) = N(2)-succinyl-L-ornithine + 2 NH4(+) + CO2. The protein operates within amino-acid degradation; L-arginine degradation via AST pathway; L-glutamate and succinate from L-arginine: step 2/5. Catalyzes the hydrolysis of N(2)-succinylarginine into N(2)-succinylornithine, ammonia and CO(2). This Pseudomonas putida (strain ATCC 47054 / DSM 6125 / CFBP 8728 / NCIMB 11950 / KT2440) protein is N-succinylarginine dihydrolase.